The chain runs to 318 residues: Magnetosome protein MamM (318 aa).

The tract at residues 1–210 (MRKSGCAVCS…FMDAYRGLMD (210 aa)) is transmembrane domain (TMD). Helical transmembrane passes span 13 to 33 (IGWVGLAVSTVLMVMKAFVGL), 39 to 59 (AMLADAMYSLKDMLNALMVII), 81 to 101 (FILSMVVSVVFIVLTGYLLVH), and 117 to 137 (LIVLWAALVSIGVNVGMYFYS). The segment at 211–318 (HTAGEAVQNR…DEVMLSKVDN (108 aa)) is C-terminal domain (CTD). Aspartate 249, histidine 264, histidine 285, and glutamate 289 together coordinate Fe cation.

Belongs to the cation diffusion facilitator (CDF) transporter (TC 2.A.4) family. As to quaternary structure, forms homodimers via its C-terminal domain (CTD) in the presence of metal cations. Interacts with MamB via their CTD. Isolated CTD forms homodimers.

Its subcellular location is the magnetosome membrane. The protein resides in the cell inner membrane. Its function is as follows. Essential for magnetosome formation; required for stable accumulation of MamB. May nucleate iron crystal formation. Probably binds and transports iron. Binds divalent cations, possibly up to 3 Zn(2+) per dimer in vitro, probably iron in vivo. One of 7 genes (mamLQBIEMO) able to induce magnetosome membrane biogenesis; coexpression of mamLQRBIEMO in a deletion of the 17 gene mamAB operon restores magnetosome vesicle formation but not magnetite biosynthesis. The chain is Magnetosome protein MamM from Magnetospirillum gryphiswaldense (strain DSM 6361 / JCM 21280 / NBRC 15271 / MSR-1).